A 188-amino-acid polypeptide reads, in one-letter code: Pyridoxal 5'-phosphate synthase subunit PdxT (188 aa).

Residue 46 to 48 (GES) coordinates L-glutamine. Catalysis depends on cysteine 78, which acts as the Nucleophile. Residues arginine 106 and 132–133 (IR) each bind L-glutamine. Active-site charge relay system residues include histidine 169 and glutamate 171.

Belongs to the glutaminase PdxT/SNO family. In terms of assembly, in the presence of PdxS, forms a dodecamer of heterodimers. Only shows activity in the heterodimer.

The catalysed reaction is aldehydo-D-ribose 5-phosphate + D-glyceraldehyde 3-phosphate + L-glutamine = pyridoxal 5'-phosphate + L-glutamate + phosphate + 3 H2O + H(+). The enzyme catalyses L-glutamine + H2O = L-glutamate + NH4(+). Its pathway is cofactor biosynthesis; pyridoxal 5'-phosphate biosynthesis. Catalyzes the hydrolysis of glutamine to glutamate and ammonia as part of the biosynthesis of pyridoxal 5'-phosphate. The resulting ammonia molecule is channeled to the active site of PdxS. This chain is Pyridoxal 5'-phosphate synthase subunit PdxT, found in Tropheryma whipplei (strain TW08/27) (Whipple's bacillus).